The following is a 437-amino-acid chain: 3-phosphoshikimate 1-carboxyvinyltransferase (437 aa).

3-phosphoshikimate is bound by residues Lys-22, Ser-23, and Arg-27. Lys-22 is a binding site for phosphoenolpyruvate. Phosphoenolpyruvate contacts are provided by Gly-94 and Arg-122. 4 residues coordinate 3-phosphoshikimate: Ser-167, Gln-169, Asp-314, and Lys-341. Gln-169 provides a ligand contact to phosphoenolpyruvate. The Proton acceptor role is filled by Asp-314. Residues Arg-345 and Arg-389 each coordinate phosphoenolpyruvate.

It belongs to the EPSP synthase family. Monomer.

The protein localises to the cytoplasm. The enzyme catalyses 3-phosphoshikimate + phosphoenolpyruvate = 5-O-(1-carboxyvinyl)-3-phosphoshikimate + phosphate. Its pathway is metabolic intermediate biosynthesis; chorismate biosynthesis; chorismate from D-erythrose 4-phosphate and phosphoenolpyruvate: step 6/7. Functionally, catalyzes the transfer of the enolpyruvyl moiety of phosphoenolpyruvate (PEP) to the 5-hydroxyl of shikimate-3-phosphate (S3P) to produce enolpyruvyl shikimate-3-phosphate and inorganic phosphate. This chain is 3-phosphoshikimate 1-carboxyvinyltransferase, found in Oenococcus oeni (strain ATCC BAA-331 / PSU-1).